The sequence spans 175 residues: Cytochrome c-550-like protein (175 aa).

Positions 1–34 are cleaved as a signal peptide; the sequence is MYQPHFWQRSIGWLCGGLLILLLGWTIAPATALA. Positions 81, 84, 85, and 135 each coordinate heme c.

It belongs to the cytochrome c family. PsbV subfamily. Heme c serves as cofactor.

The protein localises to the cellular thylakoid membrane. Functionally, probable low-potential cytochrome c, can partially replace cytochrome c-550 (PsbV) function. The polypeptide is Cytochrome c-550-like protein (Thermosynechococcus vestitus (strain NIES-2133 / IAM M-273 / BP-1)).